Reading from the N-terminus, the 604-residue chain is uncharacterized protein (604 aa).

The N-terminal stretch at 1 to 19 (MIVRILLLFIALFTFGVQA) is a signal peptide.

To H.influenzae HbpA.

This is an uncharacterized protein from Escherichia coli (strain K12).